The chain runs to 304 residues: UDP-N-acetylenolpyruvoylglucosamine reductase (304 aa).

The region spanning 28–193 is the FAD-binding PCMH-type domain; the sequence is KTGGPADYLA…LTATFALTPG (166 aa). Arg172 is a catalytic residue. Ser222 acts as the Proton donor in catalysis. Residue Glu292 is part of the active site.

Belongs to the MurB family. FAD serves as cofactor.

It is found in the cytoplasm. The enzyme catalyses UDP-N-acetyl-alpha-D-muramate + NADP(+) = UDP-N-acetyl-3-O-(1-carboxyvinyl)-alpha-D-glucosamine + NADPH + H(+). It participates in cell wall biogenesis; peptidoglycan biosynthesis. Its function is as follows. Cell wall formation. This is UDP-N-acetylenolpyruvoylglucosamine reductase from Levilactobacillus brevis (strain ATCC 367 / BCRC 12310 / CIP 105137 / JCM 1170 / LMG 11437 / NCIMB 947 / NCTC 947) (Lactobacillus brevis).